A 396-amino-acid chain; its full sequence is MSEYSLFTSESVSEGHPDKIADQISDAVLDAIIVQDKHARVAVETLVKTGVAIVAGEVTTSAWVDLEQIVRDVICNIGYTSSDVGFDGNTCGIINIIGKQSPDINQGVDRAKPEDQGAGDQGLMFGYASNETDVLMPAPIVLSHRLVERQAEARKSGLLPWLRPDAKSQVTCRYENGKVVGIDAVVLSTQHNPEISQADLQEAVMELIVKHTLPAELLHKDTQYHINPTGKFVIGGPVGDCGLTGRKIIVDSYGGMARHGGGAFSGKDPSKVDRSAAYAGRYVAKNIVAAGLAERCEIQVSYAIGVAQPTSISVNTFGTNKVSEETIIKLVREVFDLRPYAITRMLDLLHPMYQDTAAYGHFGRTPQQKTVGEDSFTTFTWERTDKAADLRAAAGL.

H16 is an ATP binding site. D18 lines the Mg(2+) pocket. K(+) is bound at residue E44. L-methionine contacts are provided by E57 and Q100. The segment at 100–110 (QSPDINQGVDR) is flexible loop. ATP is bound by residues 165-167 (DAK), 231-232 (KF), D240, 246-247 (RK), A263, and K267. An L-methionine-binding site is contributed by D240. K271 contacts L-methionine.

This sequence belongs to the AdoMet synthase family. In terms of assembly, homotetramer; dimer of dimers. The cofactor is Mg(2+). K(+) serves as cofactor.

The protein resides in the cytoplasm. It catalyses the reaction L-methionine + ATP + H2O = S-adenosyl-L-methionine + phosphate + diphosphate. It functions in the pathway amino-acid biosynthesis; S-adenosyl-L-methionine biosynthesis; S-adenosyl-L-methionine from L-methionine: step 1/1. In terms of biological role, catalyzes the formation of S-adenosylmethionine (AdoMet) from methionine and ATP. The overall synthetic reaction is composed of two sequential steps, AdoMet formation and the subsequent tripolyphosphate hydrolysis which occurs prior to release of AdoMet from the enzyme. The polypeptide is S-adenosylmethionine synthase (Ectopseudomonas mendocina (strain ymp) (Pseudomonas mendocina)).